Consider the following 506-residue polypeptide: 2-isopropylmalate synthase (506 aa).

A Pyruvate carboxyltransferase domain is found at 4-266 (ILFMDTTLRD…EPSMTLKEIK (263 aa)). Mn(2+)-binding residues include Asp-13, His-201, His-203, and Asn-237. Residues 390-506 (NITQLQVHFV…KLKSFIQLVK (117 aa)) form a regulatory domain region.

It belongs to the alpha-IPM synthase/homocitrate synthase family. LeuA type 1 subfamily. As to quaternary structure, homodimer. The cofactor is Mn(2+).

The protein resides in the cytoplasm. The catalysed reaction is 3-methyl-2-oxobutanoate + acetyl-CoA + H2O = (2S)-2-isopropylmalate + CoA + H(+). Its pathway is amino-acid biosynthesis; L-leucine biosynthesis; L-leucine from 3-methyl-2-oxobutanoate: step 1/4. Its function is as follows. Catalyzes the condensation of the acetyl group of acetyl-CoA with 3-methyl-2-oxobutanoate (2-ketoisovalerate) to form 3-carboxy-3-hydroxy-4-methylpentanoate (2-isopropylmalate). This chain is 2-isopropylmalate synthase, found in Bacillus thuringiensis (strain Al Hakam).